A 228-amino-acid polypeptide reads, in one-letter code: Cytidylate kinase (228 aa).

12 to 20 is a binding site for ATP; it reads GPSGAGKGT.

The protein belongs to the cytidylate kinase family. Type 1 subfamily.

It is found in the cytoplasm. The catalysed reaction is CMP + ATP = CDP + ADP. It carries out the reaction dCMP + ATP = dCDP + ADP. In Photobacterium profundum (strain SS9), this protein is Cytidylate kinase.